The following is a 303-amino-acid chain: Major fimbrium anchoring subunit FimB (303 aa).

The signal sequence occupies residues 1–22 (MNDAKKYIVSVLILLVAGMFGG). Cys-23 carries the N-palmitoyl cysteine lipid modification. A lipid anchor (S-diacylglycerol cysteine) is attached at Cys-23.

It belongs to the bacteroidetes fimbrillin superfamily. FimB/Mfa2 family. As to quaternary structure, fimB is not part of the fimbrium itself, but anchors the fimbrium in the outer membrane. Linear, head-to-tail oligomerization of fimbrial subunits mediates assembly of the fimbrium stalk, while the minor components FimC, FimD and FimE probably form the fimbrium tip. The anchoring subunit FimB limits fimbrium length and is important for solid fimbrium attachment to the outer membrane. In its absence, the major fimbriae become very long and are easily detached from the membrane.

It localises to the cell outer membrane. Functionally, anchoring subunit of the major fimbriae. Regulates fimbrial length. These filamentous pili are attached to the cell surface; they mediate biofilm formation, adhesion onto host cells and onto other bacteria that are part of the oral microbiome. Fimbriae of P.gingivalis are major virulence factors. The polypeptide is Major fimbrium anchoring subunit FimB (Porphyromonas gingivalis (strain ATCC BAA-308 / W83)).